Consider the following 96-residue polypeptide: Large ribosomal subunit protein uL23 (96 aa).

It belongs to the universal ribosomal protein uL23 family. Part of the 50S ribosomal subunit. Contacts protein L29, and trigger factor when it is bound to the ribosome.

In terms of biological role, one of the early assembly proteins it binds 23S rRNA. One of the proteins that surrounds the polypeptide exit tunnel on the outside of the ribosome. Forms the main docking site for trigger factor binding to the ribosome. The chain is Large ribosomal subunit protein uL23 from Clostridium novyi (strain NT).